Here is a 466-residue protein sequence, read N- to C-terminus: Vacuolar-processing enzyme delta-isozyme (466 aa).

Residues methionine 1–serine 24 form the signal peptide. N-linked (GlcNAc...) asparagine glycosylation occurs at asparagine 137. The active site involves histidine 164. Cysteine 206 functions as the Nucleophile in the catalytic mechanism. The cysteines at positions 239 and 253 are disulfide-linked. N-linked (GlcNAc...) asparagine glycosylation is present at asparagine 322. Cystine bridges form between cysteine 417–cysteine 447 and cysteine 429–cysteine 464.

It belongs to the peptidase C13 family. In terms of processing, auto-catalytic activation. Seed specific. Restricted to developing seeds at 7 days after anthesis, and, at lower levels, detected in flowers. Detected in siliques, specifically in seed coats (at protein level).

Its subcellular location is the secreted. It localises to the extracellular space. It is found in the cell wall. The protein localises to the vacuole. The enzyme catalyses Hydrolysis of proteins and small molecule substrates at -Asn-|-Xaa- bonds.. Its activity is regulated as follows. Strongly inhibited by biotin-YVAD-fmk (a caspase-1 inhibitor) and by Ac-DEVD-fmk. Functionally, asparagine-specific endopeptidase that may be involved in processing of proteins targeted to vacuoles. Probably involved in post-translational proteolysis of seed storage proteins in the protein storage vacuole of developing seeds. Exhibits a caspase-1-like activity in extracellular granules. At the early stage of seed development, required for the formation of the seed coat, by regulating cell death of specific cell layers in inner integument. The polypeptide is Vacuolar-processing enzyme delta-isozyme (Arabidopsis thaliana (Mouse-ear cress)).